Consider the following 459-residue polypeptide: Ribulose bisphosphate carboxylase large chain (459 aa).

Residue lysine 4 is modified to N6,N6,N6-trimethyllysine. Substrate contacts are provided by asparagine 113 and threonine 163. Lysine 165 serves as the catalytic Proton acceptor. Residue lysine 167 coordinates substrate. Mg(2+) contacts are provided by lysine 191, aspartate 193, and glutamate 194. Residue lysine 191 is modified to N6-carboxylysine. Histidine 284 (proton acceptor) is an active-site residue. Arginine 285, histidine 317, and serine 369 together coordinate substrate.

Belongs to the RuBisCO large chain family. Type I subfamily. Heterohexadecamer of 8 large chains and 8 small chains; disulfide-linked. The disulfide link is formed within the large subunit homodimers. Requires Mg(2+) as cofactor. Post-translationally, the disulfide bond which can form in the large chain dimeric partners within the hexadecamer appears to be associated with oxidative stress and protein turnover.

It is found in the plastid. Its subcellular location is the chloroplast. The catalysed reaction is 2 (2R)-3-phosphoglycerate + 2 H(+) = D-ribulose 1,5-bisphosphate + CO2 + H2O. It catalyses the reaction D-ribulose 1,5-bisphosphate + O2 = 2-phosphoglycolate + (2R)-3-phosphoglycerate + 2 H(+). RuBisCO catalyzes two reactions: the carboxylation of D-ribulose 1,5-bisphosphate, the primary event in carbon dioxide fixation, as well as the oxidative fragmentation of the pentose substrate in the photorespiration process. Both reactions occur simultaneously and in competition at the same active site. The chain is Ribulose bisphosphate carboxylase large chain from Morus alba (White mulberry).